We begin with the raw amino-acid sequence, 224 residues long: Response regulator protein GraR (224 aa).

One can recognise a Response regulatory domain in the interval 2–115; the sequence is QILLVEDDNT…VLIAKLQAIY (114 aa). A 4-aspartylphosphate modification is found at D51. The ompR/PhoB-type DNA-binding region spans 126–224; sequence KRTLTWQDAV…KVGKGYMAHE (99 aa). Residues T128, T130, and T149 each carry the phosphothreonine modification.

Interacts with GraX. In terms of processing, phosphorylated by GraS. Phosphorylated by Stk1; phosphorylation increases the DNA-binding activity of GraR.

The protein localises to the cytoplasm. Member of the two-component regulatory system GraR/GraS involved in resistance against cationic antimicrobial peptides (CAMPs). Upon phosphorylation by GraS, functions as a transcription regulator by direct binding to promoter regions of target genes such as adhesins, exoproteins, transporters, toxins, and proteins involved in cell wall synthesis. Down-regulates the expression of many genes involved in RNA and amino acid synthesis or glycolysis. In Staphylococcus aureus (strain MRSA252), this protein is Response regulator protein GraR (graR).